The chain runs to 671 residues: DNA polymerase kappa (671 aa).

One can recognise a UmuC domain in the interval 105 to 285 (WLHVDMDAFY…LPVRKIGGIG (181 aa)). The Mg(2+) site is built by Asp-109 and Asp-200. Glu-201 is a catalytic residue. The UBZ3-type zinc-finger motif lies at 576–613 (YWIDGYKCVLCGIELPPSFVEERQEHSDFHLAQRLQNE). Zn(2+) contacts are provided by Cys-583, Cys-586, His-601, and His-605. Residues 607 to 671 (AQRLQNEETG…NQNSNETQRK (65 aa)) form a disordered region. The Nuclear localization signal signature appears at 625–632 (KRRILGKE). Basic and acidic residues predominate over residues 629 to 650 (LGKEKVNSKPKKQKPDQKDSSK). The span at 659–671 (TKSNQNSNETQRK) shows a compositional bias: polar residues.

It belongs to the DNA polymerase type-Y family. Requires Mg(2+) as cofactor. Expressed in roots, leaves, stems, flowers and siliques. Present in endoreduplicating cells.

The protein resides in the nucleus. It catalyses the reaction DNA(n) + a 2'-deoxyribonucleoside 5'-triphosphate = DNA(n+1) + diphosphate. With respect to regulation, unable to bypass a single 1,N(6)-ethenoadenine (epsilon-dA) or an abasic site lesions in DNA templates. Template-directed low-fidelity DNA polymerase specifically involved in DNA repair. Able to extend primer-terminal mispairs, and to insert nucleotides opposite to a single 7,8-dihydro-8-oxoGuanine (8-oxoG) lesion and moderately extend from the resulting primer end, thus leading to both error-free and error-prone bypass of 8-oxoG DNA lesions. Probably involved in consecutive DNA replication cycles in the absence of mitosis. Binds preferentially template-primer DNA substrates or single-stranded DNA. Plays an important role in translesion synthesis, where the normal high-fidelity DNA polymerases cannot proceed and DNA synthesis stalls. Depending on the context, it inserts the correct base, but causes frequent base transitions, transversions and frameshifts. The protein is DNA polymerase kappa of Arabidopsis thaliana (Mouse-ear cress).